Reading from the N-terminus, the 439-residue chain is Forkhead box protein J1-A (439 aa).

The segment at residues 124–218 (KPPYSYATLI…INGAMKKRRL (95 aa)) is a DNA-binding region (fork-head). The segment at 273–293 (EHGWNSISDGKSHKRKQPLPK) is disordered. Over residues 284-293 (SHKRKQPLPK) the composition is skewed to basic residues.

The protein belongs to the FOXJ1 family. As to expression, expressed in two independent areas of stage 10-11 embryos; in the dorsal blastopore lip (Spemann organizer) and shortly after in the ectodermal cells of the animal cap. As development proceeds, cells of the animal cap contribute to the epidermis and show a spotty pattern, which suggests expression in ciliated epidermal cells. Distribution of these cells is uniform in the trunk area of the embryo but more random in the head, being practically absent in the cement gland and olfactory placode. The spotted pattern becomes more dispersed as embryos grow in size. Due to cell movements during gastrulation, expression in the dorsal lip becomes located in the dorsal midline with expression restricted to the neuroectoderm. Expressed transiently in cells of the newly formed neural floor plate in the tail of older tadpoles.

Its subcellular location is the nucleus. Its function is as follows. Key transcription factor required for motile ciliogenesis. Activates genes essential for motile cilia formation and function. Required for ciliogenesis in multiciliated cells. The chain is Forkhead box protein J1-A (foxj1-a) from Xenopus laevis (African clawed frog).